Reading from the N-terminus, the 213-residue chain is MPRYYCDYCDTYLTHDSPSVRKQHNAGYKHKANVRSYYQQFEEQQTQSLIDQRIKEHLGQTAAFQQVGAAYNQHLVSFPGNPPRPRLPVLPTPGMPVAGSAPLPMNSPLVPGMRPPVLPRPVPGAPGYMPAPGMPSMMAPPGAPSMPMPPLNSLPRPPTMNVPPAVPGSTSTPTSGGAPSMMTQPMYQANPAGPTSGGFDSFNINAQGPEANH.

The Matrin-type zinc finger occupies 4-36 (YYCDYCDTYLTHDSPSVRKQHNAGYKHKANVRS). Positions 143–166 (APSMPMPPLNSLPRPPTMNVPPAV) are enriched in pro residues. Residues 143–213 (APSMPMPPLN…INAQGPEANH (71 aa)) are disordered. Residues 167 to 180 (PGSTSTPTSGGAPS) show a composition bias toward low complexity.

It belongs to the U1 small nuclear ribonucleoprotein C family. As to quaternary structure, U1 snRNP is composed of the 7 core Sm proteins B/B', D1, D2, D3, E, F and G that assemble in a heptameric protein ring on the Sm site of the small nuclear RNA to form the core snRNP, and at least 3 U1 snRNP-specific proteins U1-70K, U1-A and U1-C. U1-C interacts with U1 snRNA and the 5' splice-site region of the pre-mRNA.

It localises to the nucleus. Component of the spliceosomal U1 snRNP, which is essential for recognition of the pre-mRNA 5' splice-site and the subsequent assembly of the spliceosome. U1-C is directly involved in initial 5' splice-site recognition for both constitutive and regulated alternative splicing. The interaction with the 5' splice-site seems to precede base-pairing between the pre-mRNA and the U1 snRNA. Stimulates commitment or early (E) complex formation by stabilizing the base pairing of the 5' end of the U1 snRNA and the 5' splice-site region. This is U1 small nuclear ribonucleoprotein C from Vitis vinifera (Grape).